The sequence spans 695 residues: MKFAEHLSAHITPEWRKQYIQYEAFKDMLYSAQDQAPSVEVTDEDTVKRYFAKFEEKFFQTCEKELAKINTFYSEKLAEAQRRFATLQNELQSSLDVQKESSGVTTLRQRRKPVFHLSHEERVQHRNIKDLKLAFSEFYLSLILLQNYQNLNFTGFRKILKKHDKILETSRGADWRVIHVEVAPFYTCKKINQLISETEAVVTNELEDGDRQKAMKRLRVPPLGAAQPAPAWTTFRVGLFCGIFIVLNITLVFAAVFKLETDRTVWPLIRIYRGGFLLIEFLFLLGINTYGWRQAGVNHVLIFELNPRNNLSHQHLFEIAGFLGILWCLSLLACFFAPISIIPIYVYPLALYGFMVFFLINPTKTFYYKSRFWLLKLLFRVFTAPFHKVGFADFWLADQLNSLSVILMDLEYMICFYSFELKWDESKGLLPNDPQEPEFCHKYSYGVRAIVQCIPAWLRFIQCLRRYRDTRRAFPHLVNAGKYSTTFFTVTFAALYSTHEEQNHSDTVVFFYLWVFFCIISSCYTLIWDLKMDWGLFDKNAGENTFLREEIVYPQKAYYYCAIIEDVILRFAWTIQISITATFKPHVGNIIATVFAPLEVFRRFVWNFFRLENEHLNNCGEFRAVRDISVAPLNADDQTLLEQMMDQEDGVRNRQKNRSWKYNQSISLRRPRLASQSKARDTKVLIEDTDDEANT.

The Cytoplasmic portion of the chain corresponds to 1–228 (MKFAEHLSAH…RVPPLGAAQP (228 aa)). Residues 2 to 224 (KFAEHLSAHI…MKRLRVPPLG (223 aa)) enclose the SPX domain. The important for inositol polyphosphate binding stretch occupies residues 158–165 (KILKKHDK). The chain crosses the membrane as a helical span at residues 229-259 (APAWTTFRVGLFCGIFIVLNITLVFAAVFKL). Over 260–264 (ETDRT) the chain is Extracellular. The helical transmembrane segment at 265–296 (VWPLIRIYRGGFLLIEFLFLLGINTYGWRQAG) threads the bilayer. The Cytoplasmic portion of the chain corresponds to 297 to 309 (VNHVLIFELNPRN). A helical membrane pass occupies residues 310–337 (NLSHQHLFEIAGFLGILWCLSLLACFFA). The Extracellular portion of the chain corresponds to 338–343 (PISIIP). A helical membrane pass occupies residues 344–365 (IYVYPLALYGFMVFFLINPTKT). Positions 366–383 (FYYKSRFWLLKLLFRVFT) form an intramembrane region, helical. The Cytoplasmic portion of the chain corresponds to 384-388 (APFHK). Residues 389-422 (VGFADFWLADQLNSLSVILMDLEYMICFYSFELK) traverse the membrane as a discontinuously helical segment. Phosphate contacts are provided by Asp-398 and Asn-401. Over 423–429 (WDESKGL) the chain is Extracellular. A discontinuously helical membrane pass occupies residues 430-471 (LPNDPQEPEFCHKYSYGVRAIVQCIPAWLRFIQCLRRYRDTR). Positions 439-642 (FCHKYSYGVR…LNADDQTLLE (204 aa)) constitute an EXS domain. Residue Arg-472 is a topological domain, cytoplasmic. A helical membrane pass occupies residues 473–503 (AFPHLVNAGKYSTTFFTVTFAALYSTHEEQN). Phosphate contacts are provided by Lys-482 and Tyr-483. The Extracellular segment spans residues 504-506 (HSD). Residues 507-534 (TVVFFYLWVFFCIISSCYTLIWDLKMDW) form a helical membrane-spanning segment. Residues 535-553 (GLFDKNAGENTFLREEIVY) are Cytoplasmic-facing. A discontinuously helical membrane pass occupies residues 554–584 (PQKAYYYCAIIEDVILRFAWTIQISITATFK). Phosphate is bound at residue Arg-570. Topologically, residues 585–586 (PH) are extracellular. A helical membrane pass occupies residues 587–625 (VGNIIATVFAPLEVFRRFVWNFFRLENEHLNNCGEFRAV). The phosphate site is built by Arg-602 and Arg-603. The Cytoplasmic portion of the chain corresponds to 626 to 695 (RDISVAPLNA…IEDTDDEANT (70 aa)). The residue at position 667 (Ser-667) is a Phosphoserine. Positions 671–695 (PRLASQSKARDTKVLIEDTDDEANT) are disordered. Position 689 is a phosphothreonine (Thr-689).

The protein belongs to the SYG1 (TC 2.A.94) family. In terms of assembly, homodimer. In terms of tissue distribution, expressed in pancreatic islets.

The protein localises to the cell membrane. It catalyses the reaction phosphate(in) = phosphate(out). Functionally, inorganic ion transporter that mediates phosphate ion export across plasma membrane. Plays a major role in phosphate homeostasis, preventing intracellular phosphate accumulation and possible calcium phosphate precipitation, ultimately preserving calcium signaling. Binds inositol hexakisphosphate (Ins6P) and similar inositol polyphosphates, such as 5-diphospho-inositol pentakisphosphate (5-InsP7), which are important intracellular signaling molecules involved in regulation of phosphate flux. (Microbial infection) Receptor for xenotropic and polytropic murine leukemia (X- and P-MLV) retroviruses. Confers susceptibility to X- or P-MLV infection in vitro. The chain is Solute carrier family 53 member 1 from Mus musculus (Mouse).